Reading from the N-terminus, the 180-residue chain is NADH-quinone oxidoreductase subunit I (180 aa).

2 4Fe-4S ferredoxin-type domains span residues 48–80 and 90–119; these read IVLT…LQKA and EFFR…LTPD. [4Fe-4S] cluster contacts are provided by Cys-60, Cys-63, Cys-66, Cys-70, Cys-99, Cys-102, Cys-105, and Cys-109.

This sequence belongs to the complex I 23 kDa subunit family. In terms of assembly, NDH-1 is composed of 13 different subunits. Subunits NuoA, H, J, K, L, M, N constitute the membrane sector of the complex. Requires [4Fe-4S] cluster as cofactor.

The protein localises to the cell inner membrane. The catalysed reaction is a quinone + NADH + 5 H(+)(in) = a quinol + NAD(+) + 4 H(+)(out). NDH-1 shuttles electrons from NADH, via FMN and iron-sulfur (Fe-S) centers, to quinones in the respiratory chain. The immediate electron acceptor for the enzyme in this species is believed to be ubiquinone. Couples the redox reaction to proton translocation (for every two electrons transferred, four hydrogen ions are translocated across the cytoplasmic membrane), and thus conserves the redox energy in a proton gradient. The chain is NADH-quinone oxidoreductase subunit I from Sodalis glossinidius (strain morsitans).